Reading from the N-terminus, the 138-residue chain is ATP synthase epsilon chain (138 aa).

Belongs to the ATPase epsilon chain family. As to quaternary structure, F-type ATPases have 2 components, CF(1) - the catalytic core - and CF(0) - the membrane proton channel. CF(1) has five subunits: alpha(3), beta(3), gamma(1), delta(1), epsilon(1). CF(0) has three main subunits: a, b and c.

Its subcellular location is the cell inner membrane. Produces ATP from ADP in the presence of a proton gradient across the membrane. This is ATP synthase epsilon chain from Blochmanniella floridana.